A 508-amino-acid chain; its full sequence is Matrix metalloproteinase-19 (508 aa).

The signal sequence occupies residues 1–18 (MNCQQLWLGFLLPMTVSG). Residues 19 to 97 (RVLGLAEVAP…EDPFNQKTLK (79 aa)) constitute a propeptide that is removed on maturation. The Cysteine switch signature appears at 83-90 (PRCGLEDP). Zn(2+) is bound by residues C85 and H212. E213 is a catalytic residue. 2 residues coordinate Zn(2+): H216 and H222. Residues 262 to 288 (IRDEEEEETELPTVPPVPTEPSPMPDP) are disordered. The span at 274-287 (TVPPVPTEPSPMPD) shows a compositional bias: pro residues. 4 Hemopexin repeats span residues 286–333 (PDPC…WEGL), 334–380 (PGNL…EPNL), 381–425 (DAAL…FTGV), and 426–472 (PNQP…WMHC). C289 and C472 are oxidised to a cystine. Residue N464 is glycosylated (N-linked (GlcNAc...) asparagine).

Belongs to the peptidase M10A family. Zn(2+) serves as cofactor. Ca(2+) is required as a cofactor. Activated by autolytic cleavage after Lys-97. Post-translationally, tyrosine phosphorylated by PKDCC/VLK. As to expression, expressed in mammary gland, placenta, lung, pancreas, ovary, small intestine, spleen, thymus, prostate, testis colon, heart and blood vessel walls. Not detected in brain and peripheral blood leukocytes. Also expressed in the synovial fluid of normal and rheumatoid patients.

It localises to the secreted. Its subcellular location is the extracellular space. The protein resides in the extracellular matrix. Strongly inhibited by TIMP-2, TIMP-3 and TIMP-4, while TIMP-1 is less efficient. Endopeptidase that degrades various components of the extracellular matrix, such as aggrecan and cartilage oligomeric matrix protein (comp), during development, haemostasis and pathological conditions (arthritic disease). May also play a role in neovascularization or angiogenesis. Hydrolyzes collagen type IV, laminin, nidogen, nascin-C isoform, fibronectin, and type I gelatin. The sequence is that of Matrix metalloproteinase-19 (MMP19) from Homo sapiens (Human).